A 340-amino-acid chain; its full sequence is Putative pyridoxal kinase C18.10 (340 aa).

Positions 19 and 130 each coordinate substrate. ATP-binding positions include 189–190 (TS) and 218–230 (QFPSLSGVFTGTG). Substrate is bound at residue Asp-231.

The protein belongs to the pyridoxine kinase family. A divalent metal cation serves as cofactor.

The protein resides in the cytoplasm. Its subcellular location is the nucleus. It catalyses the reaction pyridoxal + ATP = pyridoxal 5'-phosphate + ADP + H(+). Required for synthesis of pyridoxal-5-phosphate from vitamin B6. This chain is Putative pyridoxal kinase C18.10, found in Schizosaccharomyces pombe (strain 972 / ATCC 24843) (Fission yeast).